Here is a 301-residue protein sequence, read N- to C-terminus: Acetylglutamate kinase (301 aa).

Residues 68–69 (GG), R90, and N195 contribute to the substrate site.

This sequence belongs to the acetylglutamate kinase family. ArgB subfamily.

It localises to the cytoplasm. It catalyses the reaction N-acetyl-L-glutamate + ATP = N-acetyl-L-glutamyl 5-phosphate + ADP. It participates in amino-acid biosynthesis; L-arginine biosynthesis; N(2)-acetyl-L-ornithine from L-glutamate: step 2/4. Its function is as follows. Catalyzes the ATP-dependent phosphorylation of N-acetyl-L-glutamate. The polypeptide is Acetylglutamate kinase (Pseudomonas savastanoi pv. phaseolicola (strain 1448A / Race 6) (Pseudomonas syringae pv. phaseolicola (strain 1448A / Race 6))).